Consider the following 226-residue polypeptide: 2-C-methyl-D-erythritol 4-phosphate cytidylyltransferase (226 aa).

This sequence belongs to the IspD/TarI cytidylyltransferase family. IspD subfamily.

It carries out the reaction 2-C-methyl-D-erythritol 4-phosphate + CTP + H(+) = 4-CDP-2-C-methyl-D-erythritol + diphosphate. It functions in the pathway isoprenoid biosynthesis; isopentenyl diphosphate biosynthesis via DXP pathway; isopentenyl diphosphate from 1-deoxy-D-xylulose 5-phosphate: step 2/6. Functionally, catalyzes the formation of 4-diphosphocytidyl-2-C-methyl-D-erythritol from CTP and 2-C-methyl-D-erythritol 4-phosphate (MEP). In Bacillus cereus (strain ATCC 14579 / DSM 31 / CCUG 7414 / JCM 2152 / NBRC 15305 / NCIMB 9373 / NCTC 2599 / NRRL B-3711), this protein is 2-C-methyl-D-erythritol 4-phosphate cytidylyltransferase.